Reading from the N-terminus, the 301-residue chain is 4-hydroxy-tetrahydrodipicolinate synthase (301 aa).

Residue Thr-57 participates in pyruvate binding. Tyr-143 (proton donor/acceptor) is an active-site residue. The Schiff-base intermediate with substrate role is filled by Lys-171. Pyruvate is bound at residue Ile-211.

It belongs to the DapA family. In terms of assembly, homotetramer; dimer of dimers.

It is found in the cytoplasm. The catalysed reaction is L-aspartate 4-semialdehyde + pyruvate = (2S,4S)-4-hydroxy-2,3,4,5-tetrahydrodipicolinate + H2O + H(+). It participates in amino-acid biosynthesis; L-lysine biosynthesis via DAP pathway; (S)-tetrahydrodipicolinate from L-aspartate: step 3/4. Its function is as follows. Catalyzes the condensation of (S)-aspartate-beta-semialdehyde [(S)-ASA] and pyruvate to 4-hydroxy-tetrahydrodipicolinate (HTPA). This is 4-hydroxy-tetrahydrodipicolinate synthase from Bifidobacterium longum (strain DJO10A).